The primary structure comprises 1887 residues: Fatty acid synthase subunit alpha (1887 aa).

Lys-37 is covalently cross-linked (Glycyl lysine isopeptide (Lys-Gly) (interchain with G-Cter in ubiquitin)). At Ser-50 the chain carries Phosphoserine. Residues 96-120 (ELAAKEEPAKEEAPAPTPAASAPAP) form a disordered region. Residues 98–108 (AAKEEPAKEEA) show a composition bias toward basic and acidic residues. The Carrier domain occupies 145 to 220 (VKASLLLHVL…ETFQDTFSGA (76 aa)). Residue Ser-180 is modified to O-(pantetheine 4'-phosphoryl)serine. Ser-523 is subject to Phosphoserine. A beta-ketoacyl reductase region spans residues 675–874 (DKYVLITGAG…CGAIIGWTRG (200 aa)). Residue Ser-958 is modified to Phosphoserine. Residues 1123-1657 (QEVIVEEDLE…QKGGQAIVVH (535 aa)) form the Ketosynthase family 3 (KS3) domain. The active-site For beta-ketoacyl synthase activity is the Cys-1305. Ser-1440 is subject to Phosphoserine. Active-site for beta-ketoacyl synthase activity residues include His-1542 and His-1583. Mg(2+) contacts are provided by Asp-1772, Val-1773, and Glu-1774. Residues 1772-1774 (DVE), Tyr-1798, Ser-1808, 1817-1827 (EAVFKSLGVKS), 1841-1844 (RVNK), and 1871-1873 (ISH) each bind acetyl-CoA. Mg(2+)-binding residues include Ser-1872 and His-1873.

Belongs to the thiolase-like superfamily. Fungal fatty acid synthetase subunit alpha family. [Alpha(6)beta(6)] hexamers of two multifunctional subunits (alpha and beta). 4'-phosphopantetheine is transferred from CoA to a specific serine of the Acyl carrier domain by the C-terminal PPT domain. This modification is essential for activity because fatty acids are bound in thioester linkage to the sulfhydryl of the prosthetic group.

The catalysed reaction is acetyl-CoA + n malonyl-CoA + 2n NADPH + 4n H(+) = a long-chain-acyl-CoA + n CoA + n CO2 + 2n NADP(+).. It catalyses the reaction a fatty acyl-[ACP] + malonyl-[ACP] + H(+) = a 3-oxoacyl-[ACP] + holo-[ACP] + CO2. It carries out the reaction a (3R)-hydroxyacyl-[ACP] + NADP(+) = a 3-oxoacyl-[ACP] + NADPH + H(+). Its activity is regulated as follows. Inhibited by cerulenin by covalent binding to active site of the ketoacyl synthase (KS) region. In terms of biological role, fatty acid synthetase catalyzes the formation of long-chain fatty acids from acetyl-CoA, malonyl-CoA and NADPH. The alpha subunit contains domains for: acyl carrier protein, 3-oxoacyl-[acyl-carrier-protein] reductase, and 3-oxoacyl-[acyl-carrier-protein] synthase. This subunit coordinates the binding of the six beta subunits to the enzyme complex. The sequence is that of Fatty acid synthase subunit alpha (FAS2) from Saccharomyces cerevisiae (strain ATCC 204508 / S288c) (Baker's yeast).